The following is a 300-amino-acid chain: Lysenin-related protein 2 (300 aa).

The segment at 12–35 (EQIEVDVVAVWKEGYVYENRGSTS) is N-terminal cap domain. The segment at 36-109 (VEQKIKITKG…SKEIEHTITI (74 aa)) is beta-hairpin domain. The tract at residues 110-158 (PPTSKFTRWQLNADVGGADIEYMYLIDEVTPIGGTLSIPQVIKSRAKIL) is N-terminal cap domain. A C-terminal receptor-binding domain region spans residues 159 to 299 (VGREIYLGET…EDKWILEVVK (141 aa)). Residues Lys187, Ser229, Tyr235, and Tyr284 each contribute to the an N-(acyl)-sphingosylphosphocholine site. Residues Cys274 and Cys285 are joined by a disulfide bond.

It belongs to the lysenin family. Binds to sphingomyelin as a monomer by using its C-terminal domain. Forms a nonamer when sphingomyelin/LRP-2 ratio is lower than ca 500. Oligomerization, but not binding, is influenced by the fluidity of sphingomyelin. In terms of tissue distribution, expressed by coelomocytes.

The protein resides in the secreted. Its subcellular location is the target cell membrane. Pore-forming toxin that specifically binds sphingomyelin in the plasma membrane of various cells. Has hemolytic activity. It also has antibacterial activities against B.megaterium. This Eisenia fetida (Red wiggler worm) protein is Lysenin-related protein 2.